The sequence spans 250 residues: tRNA (guanine-N(1)-)-methyltransferase (250 aa).

Residues Gly116 and 136–141 (IGDYVL) each bind S-adenosyl-L-methionine.

It belongs to the RNA methyltransferase TrmD family. Homodimer.

It is found in the cytoplasm. It carries out the reaction guanosine(37) in tRNA + S-adenosyl-L-methionine = N(1)-methylguanosine(37) in tRNA + S-adenosyl-L-homocysteine + H(+). Its function is as follows. Specifically methylates guanosine-37 in various tRNAs. In Pseudomonas putida (strain ATCC 47054 / DSM 6125 / CFBP 8728 / NCIMB 11950 / KT2440), this protein is tRNA (guanine-N(1)-)-methyltransferase.